A 126-amino-acid chain; its full sequence is UPF0102 protein HD_0802 (126 aa).

Belongs to the UPF0102 family.

In Haemophilus ducreyi (strain 35000HP / ATCC 700724), this protein is UPF0102 protein HD_0802.